Consider the following 168-residue polypeptide: Peptide deformylase 1 (168 aa).

Residues cysteine 92 and histidine 134 each coordinate Fe cation. Glutamate 135 is a catalytic residue. Histidine 138 serves as a coordination point for Fe cation.

This sequence belongs to the polypeptide deformylase family. The cofactor is Fe(2+).

It catalyses the reaction N-terminal N-formyl-L-methionyl-[peptide] + H2O = N-terminal L-methionyl-[peptide] + formate. Its function is as follows. Removes the formyl group from the N-terminal Met of newly synthesized proteins. Requires at least a dipeptide for an efficient rate of reaction. N-terminal L-methionine is a prerequisite for activity but the enzyme has broad specificity at other positions. The protein is Peptide deformylase 1 of Pseudomonas syringae pv. tomato (strain ATCC BAA-871 / DC3000).